Consider the following 876-residue polypeptide: Leucine--tRNA ligase (876 aa).

The short motif at 42 to 52 is the 'HIGH' region element; that stretch reads PYPSGKLHMGH. The 'KMSKS' region signature appears at 634–638; sequence KMSKS. Residue Lys-637 coordinates ATP.

This sequence belongs to the class-I aminoacyl-tRNA synthetase family.

The protein resides in the cytoplasm. It catalyses the reaction tRNA(Leu) + L-leucine + ATP = L-leucyl-tRNA(Leu) + AMP + diphosphate. This is Leucine--tRNA ligase from Neisseria gonorrhoeae (strain NCCP11945).